The chain runs to 267 residues: Lyso-ornithine lipid O-acyltransferase (267 aa).

The helical transmembrane segment at 7–27 threads the bilayer; it reads IFLVVAAMVALSLSLIPFQYL.

Belongs to the 1-acyl-sn-glycerol-3-phosphate acyltransferase family. OlsA subfamily.

The protein localises to the membrane. The enzyme catalyses a lyso-ornithine lipid + a fatty acyl-[ACP] = an N(2)-[(3R)-3-(acyloxy)acyl]-L-ornithine lipid + holo-[ACP]. It functions in the pathway lipid metabolism. Catalyzes the second step in the formation of ornithine lipids, which are phosphorus-free membrane lipids. Uses acyl-acyl carrier protein (acyl-AcpP) as an acyl donor and converts lyso-ornithine lipid (LOL) into ornithine lipid (OL). The polypeptide is Lyso-ornithine lipid O-acyltransferase (Brucella abortus (strain 2308)).